A 60-amino-acid polypeptide reads, in one-letter code: Histidine-rich metal-binding polypeptide (60 aa).

The segment at 1–60 (MAHHEEQHGGHHHHHHHTHHHHYHGGEHHHHHHSSHHEEGCCSTSDSHHQEEGCCHGHHE) is disordered. A compositionally biased stretch (basic residues) spans 10–35 (GHHHHHHHTHHHHYHGGEHHHHHHSS). Residues 36–60 (HHEEGCCSTSDSHHQEEGCCHGHHE) show a composition bias toward basic and acidic residues. A run of 2 repeats spans residues 38-42 (EEGCC) and 51-55 (EEGCC). Residues 38-55 (EEGCCSTSDSHHQEEGCC) form a 2 X 5 AA repeats of E-E-G-C-C region.

In terms of biological role, strongly binds nickel and zinc. Binds other metals less strongly: cobalt &gt; copper &gt; cadmium &gt; manganese. May act to increase, or at least to preserve, urease activity. Exact function is still unknown. The sequence is that of Histidine-rich metal-binding polypeptide (hpn) from Helicobacter pylori (strain J99 / ATCC 700824) (Campylobacter pylori J99).